The chain runs to 334 residues: Kihadalactone A synthase LFS (334 aa).

The Fe2OG dioxygenase domain occupies 181–286 (KTASYSNMFH…RYSTGLFLCP (106 aa)). Residues H208, D210, and H269 each coordinate Fe cation. R277 lines the 2-oxoglutarate pocket.

This sequence belongs to the iron/ascorbate-dependent oxidoreductase family. Requires Fe(2+) as cofactor. In terms of tissue distribution, expressed in maturing fruits and in juice vesicles.

It catalyses the reaction (1R,2R,3S,8R,10R,11R,15S,16S)-3-(acetyloxy)-15-(1-hydroxy-4-oxobutan-2-yl)-2,7,7,11,16-pentamethyl-5-oxo-6-oxatetracyclo[9.7.0.0(2,8).0(12,16)]octadec-12-en-10-yl acetate + 2-oxoglutarate + O2 = kihadalactone A + succinate + CO2 + 2 H2O. The protein operates within secondary metabolite biosynthesis; terpenoid biosynthesis. Functionally, 2-oxoglutarate-Fe(II) type oxidoreductase involved in the biosynthesis of limonoids triterpene natural products such as limonin, a compound with insecticidal activity responsible for the bitter taste in citrus. Catalyzes the formation of kihadalactone A. The protein is Kihadalactone A synthase LFS of Citrus sinensis (Sweet orange).